A 577-amino-acid chain; its full sequence is Sulfite reductase [NADPH] hemoprotein beta-component (577 aa).

[4Fe-4S] cluster is bound by residues Cys-441, Cys-447, Cys-486, and Cys-490. A siroheme-binding site is contributed by Cys-490.

It belongs to the nitrite and sulfite reductase 4Fe-4S domain family. In terms of assembly, alpha(8)-beta(8). The alpha component is a flavoprotein, the beta component is a hemoprotein. Requires siroheme as cofactor. It depends on [4Fe-4S] cluster as a cofactor.

It catalyses the reaction hydrogen sulfide + 3 NADP(+) + 3 H2O = sulfite + 3 NADPH + 4 H(+). It functions in the pathway sulfur metabolism; hydrogen sulfide biosynthesis; hydrogen sulfide from sulfite (NADPH route): step 1/1. Its function is as follows. Component of the sulfite reductase complex that catalyzes the 6-electron reduction of sulfite to sulfide. This is one of several activities required for the biosynthesis of L-cysteine from sulfate. This is Sulfite reductase [NADPH] hemoprotein beta-component from Pectobacterium atrosepticum (strain SCRI 1043 / ATCC BAA-672) (Erwinia carotovora subsp. atroseptica).